Here is a 155-residue protein sequence, read N- to C-terminus: Ribosomal RNA large subunit methyltransferase H (155 aa).

S-adenosyl-L-methionine is bound by residues G104 and 123 to 128; that span reads LSRLTL.

The protein belongs to the RNA methyltransferase RlmH family. In terms of assembly, homodimer.

It is found in the cytoplasm. The enzyme catalyses pseudouridine(1915) in 23S rRNA + S-adenosyl-L-methionine = N(3)-methylpseudouridine(1915) in 23S rRNA + S-adenosyl-L-homocysteine + H(+). Functionally, specifically methylates the pseudouridine at position 1915 (m3Psi1915) in 23S rRNA. This chain is Ribosomal RNA large subunit methyltransferase H, found in Marinomonas sp. (strain MWYL1).